A 1418-amino-acid polypeptide reads, in one-letter code: Sterol 3-beta-glucosyltransferase (1418 aa).

Basic and acidic residues predominate over residues 1-16 (MRPFLDDAKRRVDRKL). Disordered regions lie at residues 1–59 (MRPF…SREG), 83–188 (ARFD…RSAT), and 207–233 (LKASSTERSQPSLDESGEKGPRGASVS). Positions 18-28 (ASRQSLSTSRL) are enriched in polar residues. Basic and acidic residues-rich tracts occupy residues 35-44 (DRLKDNHDAQ) and 95-105 (SEQRPRKESSV). Over residues 106-115 (RKGTSASANT) the composition is skewed to polar residues. Low complexity predominate over residues 116 to 126 (SSPLDSSQRSS). 2 stretches are compositionally biased toward basic and acidic residues: residues 127–139 (SRTDGKSEKESGT) and 147–166 (TISDHKLFRPFESNSKHEPQ). Over residues 209-219 (ASSTERSQPSL) the composition is skewed to polar residues. Residues 249 to 288 (EKVLVEYACSLLQSILLQGYMYVTEGHICFYAYLPKKSTV) form the GRAM 1 domain. The 99-residue stretch at 289 to 387 (AIKSGYLYKR…WVKALQKVIF (99 aa)) folds into the PH domain. The tract at residues 462–651 (ISSQHLSPQP…DPTKSFSGAP (190 aa)) is disordered. Polar residues predominate over residues 486-497 (RWSLTSGTSRVL). Over residues 508–519 (ASASTSHTSLAH) the composition is skewed to low complexity. Polar residues predominate over residues 534–575 (SESILNSFEQGTESSAAWQSMTDAAESASQILNRSDVFQSPT). A compositionally biased stretch (basic and acidic residues) spans 578-598 (GLDRRPSGGERRGRRNSDETA). Over residues 599–612 (RSLSTRANVGTGQQ) the composition is skewed to polar residues. The span at 615 to 633 (ELGRRMDGDTSGREARDST) shows a compositional bias: basic and acidic residues. Residues 635 to 651 (ESDQYTQDPTKSFSGAP) are compositionally biased toward polar residues. Residues 733–799 (DRFRAHFALP…RDIENVEKEK (67 aa)) form the GRAM 2 domain. 10 residues coordinate UDP-alpha-D-glucose: S920, R921, D923, A1223, H1225, H1238, G1242, T1243, D1262, and Q1263. The tract at residues 1339-1418 (SIASSTPFSP…SGPGRKLSGR (80 aa)) is disordered. Over residues 1341-1355 (ASSTPFSPTPSAKTT) the composition is skewed to low complexity. Residues 1358-1379 (QDADDDVEDSEEWTFVGDDTDM) show a composition bias toward acidic residues. Basic and acidic residues predominate over residues 1380–1391 (EMSRRLRDRAIS).

This sequence belongs to the glycosyltransferase 28 family.

Its subcellular location is the cytoplasm. It is found in the preautophagosomal structure membrane. The catalysed reaction is a sterol + UDP-alpha-D-glucose = a sterol 3-beta-D-glucoside + UDP + H(+). It carries out the reaction ergosterol + UDP-alpha-D-glucose = ergosteryl 3-beta-D-glucoside + UDP + H(+). In terms of biological role, sterol glycosyltransferase responsible for the glycosylation of ergosterol to form ergosterol-glucoside. This is Sterol 3-beta-glucosyltransferase from Neosartorya fischeri (strain ATCC 1020 / DSM 3700 / CBS 544.65 / FGSC A1164 / JCM 1740 / NRRL 181 / WB 181) (Aspergillus fischerianus).